A 961-amino-acid chain; its full sequence is Vinculin (961 aa).

Repeat copies occupy residues 258–362 (ELDN…MGEL) and 371–470 (LGVD…ELKA). Residues 258–470 (ELDNLTVLKK…LTQKLYELKA (213 aa)) are 2 X repeats. Positions 720–778 (AIAPPQPPPLPTSLPPPIPELSALHLSNQNAERAPPRPPLPREGLAPVRPPPPETDDED) are disordered. A compositionally biased stretch (pro residues) spans 723–738 (PPQPPPLPTSLPPPIP). Thr774 carries the post-translational modification Phosphothreonine.

The protein belongs to the vinculin/alpha-catenin family. Exhibits self-association properties.

The protein localises to the cytoplasm. The protein resides in the cytoskeleton. It localises to the cell junction. Its subcellular location is the adherens junction. It is found in the cell membrane. Functionally, involved in cell adhesion. May be involved in the attachment of the actin-based microfilaments to the plasma membrane. This Drosophila melanogaster (Fruit fly) protein is Vinculin (Vinc).